The sequence spans 251 residues: 3-deoxy-manno-octulosonate cytidylyltransferase (251 aa).

It belongs to the KdsB family.

Its subcellular location is the cytoplasm. The enzyme catalyses 3-deoxy-alpha-D-manno-oct-2-ulosonate + CTP = CMP-3-deoxy-beta-D-manno-octulosonate + diphosphate. Its pathway is nucleotide-sugar biosynthesis; CMP-3-deoxy-D-manno-octulosonate biosynthesis; CMP-3-deoxy-D-manno-octulosonate from 3-deoxy-D-manno-octulosonate and CTP: step 1/1. It functions in the pathway bacterial outer membrane biogenesis; lipopolysaccharide biosynthesis. Activates KDO (a required 8-carbon sugar) for incorporation into bacterial lipopolysaccharide in Gram-negative bacteria. The sequence is that of 3-deoxy-manno-octulosonate cytidylyltransferase from Parabacteroides distasonis (strain ATCC 8503 / DSM 20701 / CIP 104284 / JCM 5825 / NCTC 11152).